Consider the following 284-residue polypeptide: RNA polymerase sigma factor RpoH (284 aa).

Residues 54–123 (MVLAHLRFVV…IHEFILRNWR (70 aa)) are sigma-70 factor domain-2. Positions 78–81 (DLIQ) match the Interaction with polymerase core subunit RpoC motif. Residues 229–280 (ALEGLDERSRDILQQRWLSEEKATLHDLAEKYNVSAERIRQLEKNAMSKLKG) form a sigma-70 factor domain-4 region. Residues 253-272 (LHDLAEKYNVSAERIRQLEK) constitute a DNA-binding region (H-T-H motif).

The protein belongs to the sigma-70 factor family. RpoH subfamily. Interacts with the RNA polymerase core enzyme.

The protein resides in the cytoplasm. Sigma factors are initiation factors that promote the attachment of RNA polymerase to specific initiation sites and are then released. This sigma factor is involved in regulation of expression of heat shock genes. The polypeptide is RNA polymerase sigma factor RpoH (Pseudomonas aeruginosa (strain ATCC 15692 / DSM 22644 / CIP 104116 / JCM 14847 / LMG 12228 / 1C / PRS 101 / PAO1)).